Consider the following 311-residue polypeptide: Pyrimidine-specific ribonucleoside hydrolase RihA (311 aa).

His240 is an active-site residue.

The protein belongs to the IUNH family. RihA subfamily.

Hydrolyzes with equal efficiency cytidine or uridine to ribose and cytosine or uracil, respectively. The polypeptide is Pyrimidine-specific ribonucleoside hydrolase RihA (Escherichia fergusonii (strain ATCC 35469 / DSM 13698 / CCUG 18766 / IAM 14443 / JCM 21226 / LMG 7866 / NBRC 102419 / NCTC 12128 / CDC 0568-73)).